The primary structure comprises 179 residues: Large ribosomal subunit protein uL5 (179 aa).

It belongs to the universal ribosomal protein uL5 family. Part of the 50S ribosomal subunit; part of the 5S rRNA/L5/L18/L25 subcomplex. Contacts the 5S rRNA and the P site tRNA. Forms a bridge to the 30S subunit in the 70S ribosome.

This is one of the proteins that bind and probably mediate the attachment of the 5S RNA into the large ribosomal subunit, where it forms part of the central protuberance. In the 70S ribosome it contacts protein S13 of the 30S subunit (bridge B1b), connecting the 2 subunits; this bridge is implicated in subunit movement. Contacts the P site tRNA; the 5S rRNA and some of its associated proteins might help stabilize positioning of ribosome-bound tRNAs. The polypeptide is Large ribosomal subunit protein uL5 (Pectobacterium atrosepticum (strain SCRI 1043 / ATCC BAA-672) (Erwinia carotovora subsp. atroseptica)).